The following is a 153-amino-acid chain: UPF0102 protein Pnap_0271 (153 aa).

Belongs to the UPF0102 family.

In Polaromonas naphthalenivorans (strain CJ2), this protein is UPF0102 protein Pnap_0271.